Here is a 336-residue protein sequence, read N- to C-terminus: Dihydroorotate dehydrogenase (quinone) (336 aa).

FMN is bound by residues 62-66 (AGMDK) and threonine 86. Lysine 66 contributes to the substrate binding site. Residue 111–115 (NRMGF) coordinates substrate. Residues asparagine 139 and asparagine 172 each contribute to the FMN site. Asparagine 172 serves as a coordination point for substrate. Serine 175 functions as the Nucleophile in the catalytic mechanism. Asparagine 177 contacts substrate. Lysine 217 and threonine 245 together coordinate FMN. 246–247 (NT) serves as a coordination point for substrate. Residues glycine 268, glycine 297, and 318-319 (YS) contribute to the FMN site.

It belongs to the dihydroorotate dehydrogenase family. Type 2 subfamily. Monomer. Requires FMN as cofactor.

Its subcellular location is the cell membrane. The enzyme catalyses (S)-dihydroorotate + a quinone = orotate + a quinol. It functions in the pathway pyrimidine metabolism; UMP biosynthesis via de novo pathway; orotate from (S)-dihydroorotate (quinone route): step 1/1. In terms of biological role, catalyzes the conversion of dihydroorotate to orotate with quinone as electron acceptor. The chain is Dihydroorotate dehydrogenase (quinone) from Buchnera aphidicola subsp. Schizaphis graminum (strain Sg).